A 550-amino-acid chain; its full sequence is MLKNINPTQTQAWKALTAHFESAQDMDLKALFAQDSERFAKYSARFGQDILVDYSKNLVNAETMQHLFALAKETDLQSAITAMFKGEAINQTEDRAVLHTALRNRSNSPVLVNGEDVMPAVNAVLAKMKAFSERVIGGEWKGFTGKAITDVVNIGIGGSDLGPYMVTEALVPYKNHLTMHFVSNVDGTHMAETLKNVDPETTLFLVASKTFTTQETMTNAHTARDWFLKAAGDEAHVAKHFAALSTNGKAVAEFGIDTDNMFEFWDWVGGRYSLWSAIGLSIILSIGYDNFVELLAGAHEMDQHFVNTPFESNIPVILALIGIWYNNFHGAESEAILPYDQYLHRFAAYFQQGNMESNGKYVDRNGNPVTYQTGPIIWGEPGTNGQHAFYQLIHQGTKLIPCDFIAPAVSHNLVGDHHQKLMSNFFAQTEALAFGKSAQAVQAELEKAGKSAAEIAALVPFKVFEGNRPTNSILVKQITPRTLGNLIAMYEHKIFVQGVIWNIFSFDQWGVELGKQLANQILPELADSAAVTSHDSSTNGLINAFKAFRA.

Glu-356 functions as the Proton donor in the catalytic mechanism. Catalysis depends on residues His-387 and Lys-515.

Belongs to the GPI family.

It is found in the cytoplasm. The catalysed reaction is alpha-D-glucose 6-phosphate = beta-D-fructose 6-phosphate. The protein operates within carbohydrate biosynthesis; gluconeogenesis. It participates in carbohydrate degradation; glycolysis; D-glyceraldehyde 3-phosphate and glycerone phosphate from D-glucose: step 2/4. Functionally, catalyzes the reversible isomerization of glucose-6-phosphate to fructose-6-phosphate. The polypeptide is Glucose-6-phosphate isomerase (Vibrio cholerae serotype O1 (strain ATCC 39315 / El Tor Inaba N16961)).